The following is a 123-amino-acid chain: UPF0102 protein mma_0204 (123 aa).

This sequence belongs to the UPF0102 family.

This is UPF0102 protein mma_0204 from Janthinobacterium sp. (strain Marseille) (Minibacterium massiliensis).